Here is a 343-residue protein sequence, read N- to C-terminus: Flavonoid 3'-O-methyltransferase FOMT (343 aa).

Residues G184, D207, D227, M228, M240, and K241 each contribute to the S-adenosyl-L-homocysteine site. H245 acts as the Proton acceptor in catalysis. Active-site residues include E273 and E305.

It belongs to the class I-like SAM-binding methyltransferase superfamily. Cation-independent O-methyltransferase family. As to quaternary structure, homodimer.

The catalysed reaction is 3',5-dihydroxy-3,4',7-trimethoxyflavone + S-adenosyl-L-methionine = 5-hydroxy-3,7,3',4'-tetramethoxyflavone + S-adenosyl-L-homocysteine + H(+). It participates in flavonoid metabolism. Inhibited by nickel (NiCl(2) and NiSO(4)) and para-chloromercuribenzoate. Functionally, catalyzes the 3'- or 5'-O-methylation of partially methylated flavonols, but does not accept quercetin or caffeate as substrates for methylation. The protein is Flavonoid 3'-O-methyltransferase FOMT of Chrysosplenium americanum (American golden saxifrage).